Consider the following 337-residue polypeptide: Ketol-acid reductoisomerase (NADP(+)) (337 aa).

One can recognise a KARI N-terminal Rossmann domain in the interval 3–183; sequence VEMFYDDDAD…GGTRAGVIKT (181 aa). Residues 26 to 29, Lys-49, Ser-52, Ser-54, and 84 to 87 contribute to the NADP(+) site; these read YGSQ and DTAQ. His-109 is an active-site residue. Gly-135 is an NADP(+) binding site. The KARI C-terminal knotted domain occupies 184-329; the sequence is TFKEETETDL…KKLRDLMSWV (146 aa). Asp-192, Glu-196, Glu-228, and Glu-232 together coordinate Mg(2+). Substrate is bound at residue Ser-253.

This sequence belongs to the ketol-acid reductoisomerase family. Mg(2+) serves as cofactor.

The catalysed reaction is (2R)-2,3-dihydroxy-3-methylbutanoate + NADP(+) = (2S)-2-acetolactate + NADPH + H(+). The enzyme catalyses (2R,3R)-2,3-dihydroxy-3-methylpentanoate + NADP(+) = (S)-2-ethyl-2-hydroxy-3-oxobutanoate + NADPH + H(+). The protein operates within amino-acid biosynthesis; L-isoleucine biosynthesis; L-isoleucine from 2-oxobutanoate: step 2/4. It participates in amino-acid biosynthesis; L-valine biosynthesis; L-valine from pyruvate: step 2/4. Functionally, involved in the biosynthesis of branched-chain amino acids (BCAA). Catalyzes an alkyl-migration followed by a ketol-acid reduction of (S)-2-acetolactate (S2AL) to yield (R)-2,3-dihydroxy-isovalerate. In the isomerase reaction, S2AL is rearranged via a Mg-dependent methyl migration to produce 3-hydroxy-3-methyl-2-ketobutyrate (HMKB). In the reductase reaction, this 2-ketoacid undergoes a metal-dependent reduction by NADPH to yield (R)-2,3-dihydroxy-isovalerate. The protein is Ketol-acid reductoisomerase (NADP(+)) of Rhodococcus jostii (strain RHA1).